The sequence spans 250 residues: tRNA (guanine-N(1)-)-methyltransferase (250 aa).

S-adenosyl-L-methionine-binding positions include G113 and 133 to 138 (VGDYVL).

Belongs to the RNA methyltransferase TrmD family. As to quaternary structure, homodimer.

It localises to the cytoplasm. It catalyses the reaction guanosine(37) in tRNA + S-adenosyl-L-methionine = N(1)-methylguanosine(37) in tRNA + S-adenosyl-L-homocysteine + H(+). In terms of biological role, specifically methylates guanosine-37 in various tRNAs. The polypeptide is tRNA (guanine-N(1)-)-methyltransferase (Proteus mirabilis (strain HI4320)).